Here is a 404-residue protein sequence, read N- to C-terminus: Tryptophan synthase beta chain (404 aa).

An N6-(pyridoxal phosphate)lysine modification is found at Lys-98.

This sequence belongs to the TrpB family. Tetramer of two alpha and two beta chains. Pyridoxal 5'-phosphate is required as a cofactor.

The enzyme catalyses (1S,2R)-1-C-(indol-3-yl)glycerol 3-phosphate + L-serine = D-glyceraldehyde 3-phosphate + L-tryptophan + H2O. Its pathway is amino-acid biosynthesis; L-tryptophan biosynthesis; L-tryptophan from chorismate: step 5/5. The beta subunit is responsible for the synthesis of L-tryptophan from indole and L-serine. The sequence is that of Tryptophan synthase beta chain from Rhodopseudomonas palustris (strain ATCC BAA-98 / CGA009).